Here is a 211-residue protein sequence, read N- to C-terminus: tRNA (guanine-N(7)-)-methyltransferase (211 aa).

E43, E68, N95, and D117 together coordinate S-adenosyl-L-methionine. The active site involves D117. Substrate contacts are provided by residues K121, D153, and 190–193; that span reads TEYE.

The protein belongs to the class I-like SAM-binding methyltransferase superfamily. TrmB family.

It catalyses the reaction guanosine(46) in tRNA + S-adenosyl-L-methionine = N(7)-methylguanosine(46) in tRNA + S-adenosyl-L-homocysteine. It participates in tRNA modification; N(7)-methylguanine-tRNA biosynthesis. Catalyzes the formation of N(7)-methylguanine at position 46 (m7G46) in tRNA. The protein is tRNA (guanine-N(7)-)-methyltransferase of Alkaliphilus oremlandii (strain OhILAs) (Clostridium oremlandii (strain OhILAs)).